The sequence spans 482 residues: Probable glycine dehydrogenase (decarboxylating) subunit 2 (482 aa).

At Lys269 the chain carries N6-(pyridoxal phosphate)lysine.

It belongs to the GcvP family. C-terminal subunit subfamily. In terms of assembly, the glycine cleavage system is composed of four proteins: P, T, L and H. In this organism, the P 'protein' is a heterodimer of two subunits. It depends on pyridoxal 5'-phosphate as a cofactor.

It catalyses the reaction N(6)-[(R)-lipoyl]-L-lysyl-[glycine-cleavage complex H protein] + glycine + H(+) = N(6)-[(R)-S(8)-aminomethyldihydrolipoyl]-L-lysyl-[glycine-cleavage complex H protein] + CO2. Functionally, the glycine cleavage system catalyzes the degradation of glycine. The P protein binds the alpha-amino group of glycine through its pyridoxal phosphate cofactor; CO(2) is released and the remaining methylamine moiety is then transferred to the lipoamide cofactor of the H protein. This is Probable glycine dehydrogenase (decarboxylating) subunit 2 from Pelodictyon phaeoclathratiforme (strain DSM 5477 / BU-1).